Here is a 167-residue protein sequence, read N- to C-terminus: RNA pyrophosphohydrolase (167 aa).

A Nudix hydrolase domain is found at 8 to 158; sequence PYRTCVGMML…KRPVYERVVK (151 aa). Residues 47–68 carry the Nudix box motif; that stretch reads GGVDPGEDTWEAAKRELYEETN.

Belongs to the Nudix hydrolase family. RppH subfamily. A divalent metal cation is required as a cofactor.

In terms of biological role, accelerates the degradation of transcripts by removing pyrophosphate from the 5'-end of triphosphorylated RNA, leading to a more labile monophosphorylated state that can stimulate subsequent ribonuclease cleavage. This is RNA pyrophosphohydrolase from Rhodopseudomonas palustris (strain HaA2).